The chain runs to 464 residues: MQPPLFVISVYLLWLKYCDSAPTWKETDATDGNLKSLPEVGEADVEGEVKKALIGIKQMKIMMERREEEHAKLMKALKKCKEEKQEAQKLMNEVQERLEEEEKLCQASSIGSWDGCRPCLESNCIRFYTACQPGWSSVKSMMKQFLKKIYRFLSSQSEDVKDPPAIEQLTKEDLQVVHIENLFSQLAVDAKSLFNMSFYIFKQMQQEFDQAFQLYFMSDVDLMEPYPPALSKEITKKEELGQRWGIPNVFQLFHNFSLSVYGRVQQIIMKTLNAIEDSWEPHKELDQRGMTSEMLPEQNGEMCEEFVKNLSGCLKFRKRCQKCHNYLSEECPDVPELHIEFLEALKLVNVSNQQYDQIVQMTQYHLEDTIYLMEKMQEQFGWVSQLASHNPVTEDIFNSTKAVPKIHGGDSSKQDEIMVDSSSILPSSNFTVQNPPEEGAESSNVIYYMAAKVLQHLKGCFETW.

The N-terminal stretch at 1 to 20 (MQPPLFVISVYLLWLKYCDS) is a signal peptide. The stretch at 56–109 (IKQMKIMMERREEEHAKLMKALKKCKEEKQEAQKLMNEVQERLEEEEKLCQASS) forms a coiled coil. Intrachain disulfides connect Cys105-Cys331, Cys116-Cys323, Cys119-Cys320, Cys124-Cys313, and Cys131-Cys303. Residues Asn195, Asn255, Asn309, Asn349, Asn398, and Asn429 are each glycosylated (N-linked (GlcNAc...) asparagine).

Belongs to the clusterin family.

Its subcellular location is the secreted. The sequence is that of Clusterin-like protein 1 from Rattus norvegicus (Rat).